The sequence spans 109 residues: Hainantoxin-XVIII-4 (109 aa).

An N-terminal signal peptide occupies residues 1–18 (MKLSIIIIATSLVIAVVA). The propeptide occupies 19 to 46 (FPSKDSKAIENDKTEQRMEIVVQETARA). Disulfide bonds link Cys55–Cys68, Cys59–Cys108, and Cys61–Cys81.

This sequence belongs to the neurotoxin 25 family. F7 subfamily. As to expression, expressed by the venom gland.

Its subcellular location is the secreted. Functionally, putative ion channel inhibitor. The polypeptide is Hainantoxin-XVIII-4 (Cyriopagopus hainanus (Chinese bird spider)).